Reading from the N-terminus, the 73-residue chain is Translation initiation factor IF-1 (73 aa).

Residues 1–73 (MSKKKDVIEM…TRGRITYRYK (73 aa)) enclose the S1-like domain.

It belongs to the IF-1 family. In terms of assembly, component of the 30S ribosomal translation pre-initiation complex which assembles on the 30S ribosome in the order IF-2 and IF-3, IF-1 and N-formylmethionyl-tRNA(fMet); mRNA recruitment can occur at any time during PIC assembly.

It localises to the cytoplasm. Functionally, one of the essential components for the initiation of protein synthesis. Stabilizes the binding of IF-2 and IF-3 on the 30S subunit to which N-formylmethionyl-tRNA(fMet) subsequently binds. Helps modulate mRNA selection, yielding the 30S pre-initiation complex (PIC). Upon addition of the 50S ribosomal subunit IF-1, IF-2 and IF-3 are released leaving the mature 70S translation initiation complex. This Roseiflexus castenholzii (strain DSM 13941 / HLO8) protein is Translation initiation factor IF-1.